We begin with the raw amino-acid sequence, 402 residues long: Speedy protein E2 (402 aa).

The segment at 1-89 (MDRTETRFRK…EEPEKELAPE (89 aa)) is disordered. Over residues 16 to 39 (GKITTSRQPHPQNEQSPQRSTSGY) the composition is skewed to polar residues. Residues 76–89 (DESEEEPEKELAPE) show a composition bias toward acidic residues.

Belongs to the Speedy/Ringo family.

The protein is Speedy protein E2 (SPDYE2) of Homo sapiens (Human).